Consider the following 798-residue polypeptide: Sodium/hydrogen exchanger 4 (798 aa).

Over 1–13 the chain is Cytoplasmic; that stretch reads MALQMFVTYSPWN. The name=A/M1 intramembrane region spans 14–28; it reads CLLLLVALECSEASS. Residues 29-69 are Cytoplasmic-facing; it reads DLNESANSTAQYASNAWFAAASSEPEEGISVFELDYDYVQI. Positions 70–90 form an intramembrane region, name=B/M2; that stretch reads PYEVTLWILLASLAKIGFHLY. The Cytoplasmic segment spans residues 91–94; it reads HRLP. The helical transmembrane segment at 95–115 threads the bilayer; the sequence is GLMPESCLLILVGALVGGIIF. Topologically, residues 116–127 are extracellular; the sequence is GTDHKSPPVMDS. A helical membrane pass occupies residues 128–148; that stretch reads SIYFLYLLPPIVLEGGYFMPT. Topologically, residues 149 to 154 are cytoplasmic; it reads RPFFEN. The chain crosses the membrane as a helical span at residues 155–175; that stretch reads IGSILWWAVLGALINALGIGL. Topologically, residues 176 to 196 are extracellular; it reads SLYLICQVKAFGLGDVNLLQN. Residues 197 to 217 form a helical membrane-spanning segment; the sequence is LLFGSLISAVDPVAVLAVFEE. Topologically, residues 218 to 226 are cytoplasmic; that stretch reads ARVNEQLYM. Residues 227 to 247 form a helical membrane-spanning segment; it reads MIFGEALLNDGITVVLYNMLI. Over 248-270 the chain is Extracellular; that stretch reads AFTKMHKFEDIETVDILAGCARF. The helical transmembrane segment at 271-291 threads the bilayer; that stretch reads IVVGLGGVLFGIVFGFISAFI. The Cytoplasmic portion of the chain corresponds to 292–304; that stretch reads TRFTQNISAIEPL. Residues 305 to 325 traverse the membrane as a helical segment; it reads IVFMFSYLSYLAAETLYLSGI. Over 326–356 the chain is Extracellular; sequence LAITACAVTMKKYVEENVSQTSYTTIKYFMK. The N-linked (GlcNAc...) asparagine glycan is linked to N342. A helical membrane pass occupies residues 357–373; sequence MLSSVSETLIFIFMGVS. At 374-384 the chain is on the cytoplasmic side; it reads TVGKNHEWNWA. The helical transmembrane segment at 385 to 405 threads the bilayer; that stretch reads FICFTLAFCQIWRAISVFALF. Topologically, residues 406-420 are extracellular; the sequence is YISNQFRTFPFSIKD. Residues 421–441 constitute an intramembrane region (name=L); the sequence is QCIIFYSGVRGAGSFSLAFLL. The Extracellular portion of the chain corresponds to 442–450; sequence PLSLFPRKK. Residues 451-471 traverse the membrane as a helical segment; sequence MFVTATLVVIYFTVFIQGITV. Residues 472–798 are Cytoplasmic-facing; it reads GPLVRYLDVK…RSHSPLLQKK (327 aa). Disordered regions lie at residues 662-690 and 776-798; these read PYGNPQSAGRDTRAAGFSDDDSSDPGSPS and RWTADHGHGRDHHRSHSPLLQKK. Positions 784-798 are enriched in basic residues; sequence GRDHHRSHSPLLQKK.

Belongs to the monovalent cation:proton antiporter 1 (CPA1) transporter (TC 2.A.36) family. Homodimer; each protomer has one site for sodium and one site for proton binding. Interacts with CHP1 and CHP2. In terms of processing, may be phosphorylated.

Its subcellular location is the basolateral cell membrane. It is found in the apical cell membrane. It localises to the zymogen granule membrane. The enzyme catalyses Na(+)(in) + H(+)(out) = Na(+)(out) + H(+)(in). The catalysed reaction is Na(+)(out) + NH4(+)(in) = Na(+)(in) + NH4(+)(out). Electroneutral antiporter that exchanges sodium for protons or ammonium ions at the basolateral membrane of epithelia to regulate cell volume and intracellular pH upon hypertonic conditions. As part of transcellular ammonia transport in renal tubules, mediates basolateral ammonium extrusion in the medullary thick ascending limb, regulating the corticopapillary ammonium gradient and overall renal acid excretion. Mediates sodium:proton exchange in gastric parietal cells secondary to cAMP-dependent acid secretion and hyperosmolarity. Possibly coupled to chloride:bicarbonate antiporter, enables loading of parietal cells with sodium and chloride ions to maintain cell volume and normal gastric acid secretion. Functions as a sodium sensor in neurons of organum vasculosum of the lamina terminalis where it regulates water intake in response to increased sodium concentration in body fluids. The polypeptide is Sodium/hydrogen exchanger 4 (SLC9A4) (Homo sapiens (Human)).